The primary structure comprises 202 residues: Adenylyl-sulfate kinase (202 aa).

Gly-31–Ser-38 is an ATP binding site. The active-site Phosphoserine intermediate is the Ser-105.

It belongs to the APS kinase family.

It catalyses the reaction adenosine 5'-phosphosulfate + ATP = 3'-phosphoadenylyl sulfate + ADP + H(+). It functions in the pathway sulfur metabolism; hydrogen sulfide biosynthesis; sulfite from sulfate: step 2/3. In terms of biological role, catalyzes the synthesis of activated sulfate. The sequence is that of Adenylyl-sulfate kinase (MET14) from Saccharomyces cerevisiae (strain ATCC 204508 / S288c) (Baker's yeast).